A 657-amino-acid polypeptide reads, in one-letter code: Glycogen debranching enzyme (657 aa).

The active-site Nucleophile is D336. E371 (proton donor) is an active-site residue. Basic and acidic residues predominate over residues 458-467 (NEANGEENRD). The tract at residues 458–479 (NEANGEENRDGTNNNYSNNHGK) is disordered.

Belongs to the glycosyl hydrolase 13 family.

It carries out the reaction Hydrolysis of (1-&gt;6)-alpha-D-glucosidic linkages to branches with degrees of polymerization of three or four glucose residues in limit dextrin.. It functions in the pathway glycan degradation; glycogen degradation. Functionally, removes maltotriose and maltotetraose chains that are attached by 1,6-alpha-linkage to the limit dextrin main chain, generating a debranched limit dextrin. The protein is Glycogen debranching enzyme of Escherichia coli O8 (strain IAI1).